A 107-amino-acid polypeptide reads, in one-letter code: Putative protein RFPL3S (107 aa).

In terms of tissue distribution, strongly expressed in the testis and weakly in brain, placenta and pancreas.

This is Putative protein RFPL3S (RFPL3S) from Homo sapiens (Human).